The primary structure comprises 130 residues: Sulfurtransferase TusD (130 aa).

Cys80 functions as the Cysteine persulfide intermediate in the catalytic mechanism.

This sequence belongs to the DsrE/TusD family. As to quaternary structure, heterohexamer, formed by a dimer of trimers. The hexameric TusBCD complex contains 2 copies each of TusB, TusC and TusD. The TusBCD complex interacts with TusE.

Its subcellular location is the cytoplasm. Its function is as follows. Part of a sulfur-relay system required for 2-thiolation of 5-methylaminomethyl-2-thiouridine (mnm(5)s(2)U) at tRNA wobble positions. Accepts sulfur from TusA and transfers it in turn to TusE. This is Sulfurtransferase TusD from Proteus mirabilis (strain HI4320).